A 383-amino-acid polypeptide reads, in one-letter code: Beta-1,3-galactosyltransferase 4 (383 aa).

Residues 1–8 (MPLSLFRR) lie on the Cytoplasmic side of the membrane. The helical transmembrane segment at 9–29 (LLLAALLLVIIWTLFGPSGIG) threads the bilayer. Residues 30 to 383 (EELLSLSLAS…RCRVIAWLHS (354 aa)) are Lumenal-facing. A glycan (N-linked (GlcNAc...) asparagine) is linked at Asn149.

The protein belongs to the glycosyltransferase 31 family.

It is found in the golgi apparatus membrane. It catalyses the reaction a ganglioside GM2 (d18:1(4E)) + UDP-alpha-D-galactose = a ganglioside GM1 (d18:1(4E)) + UDP + H(+). The catalysed reaction is a ganglioside GM2 + UDP-alpha-D-galactose = a ganglioside GM1 + UDP + H(+). It carries out the reaction a ganglioside GD2 (d18:1(4E)) + UDP-alpha-D-galactose = a ganglioside GD1b (d18:1(4E)) + UDP + H(+). The enzyme catalyses a ganglioside GA2 (d18:1(4E)) + UDP-alpha-D-galactose = a ganglioside GA1 (d18:1(4E)) + UDP + H(+). Its pathway is protein modification; protein glycosylation. In terms of biological role, involved in GM1/GD1B/GA1 ganglioside biosynthesis. This is Beta-1,3-galactosyltransferase 4 (B3GALT4) from Canis lupus familiaris (Dog).